Reading from the N-terminus, the 439-residue chain is Proline--tRNA ligase (439 aa).

This sequence belongs to the class-II aminoacyl-tRNA synthetase family. ProS type 2 subfamily. Homodimer.

The protein localises to the cytoplasm. It carries out the reaction tRNA(Pro) + L-proline + ATP = L-prolyl-tRNA(Pro) + AMP + diphosphate. Catalyzes the attachment of proline to tRNA(Pro) in a two-step reaction: proline is first activated by ATP to form Pro-AMP and then transferred to the acceptor end of tRNA(Pro). This is Proline--tRNA ligase from Beijerinckia indica subsp. indica (strain ATCC 9039 / DSM 1715 / NCIMB 8712).